The following is a 491-amino-acid chain: Polybrominated aromatic compounds synthase (491 aa).

Heme is bound at residue cysteine 437.

The protein belongs to the cytochrome P450 family. Heme serves as cofactor.

Functionally, cytochrome P450 protein involved in the biosynthesis of polybrominated aromatic organic compounds. In the presence of ferredoxin, ferredoxin reductase and NADH, catalyzes the coupling of bromophenols and bromopyrroles, forming various polybrominated biphenyls and hydroxylated polybrominated diphenyl ethers (OH-BDE). Can also mediate the heterocoupling of 3,5-dibromocatechol. Can also use chlorinated phenolic substrates. 2,3,4-tribromopyrrole could be the physiological substrate. This Pseudoalteromonas luteoviolacea (strain 2ta16) protein is Polybrominated aromatic compounds synthase.